A 234-amino-acid polypeptide reads, in one-letter code: Probable chemoreceptor glutamine deamidase CheD (234 aa).

The protein belongs to the CheD family.

The enzyme catalyses L-glutaminyl-[protein] + H2O = L-glutamyl-[protein] + NH4(+). In terms of biological role, probably deamidates glutamine residues to glutamate on methyl-accepting chemotaxis receptors (MCPs), playing an important role in chemotaxis. This chain is Probable chemoreceptor glutamine deamidase CheD, found in Burkholderia mallei (strain NCTC 10247).